A 221-amino-acid chain; its full sequence is Peroxiredoxin 2 (221 aa).

Positions 15-170 constitute a Thioredoxin domain; sequence PQIGAPAPDF…IIRIIDALQT (156 aa). Catalysis depends on C56, which acts as the Cysteine sulfenic acid (-SOH) intermediate. R133 is a binding site for substrate. An intrachain disulfide couples C211 to C217.

It belongs to the peroxiredoxin family. Prx6 subfamily. Homodecamer. Pentamer of dimers that assemble into a ring structure.

The protein resides in the cytoplasm. The enzyme catalyses a hydroperoxide + [thioredoxin]-dithiol = an alcohol + [thioredoxin]-disulfide + H2O. Thiol-specific peroxidase that catalyzes the reduction of hydrogen peroxide and organic hydroperoxides to water and alcohols, respectively. Plays a role in cell protection against oxidative stress by detoxifying peroxides. This chain is Peroxiredoxin 2, found in Caldanaerobacter subterraneus subsp. tengcongensis (strain DSM 15242 / JCM 11007 / NBRC 100824 / MB4) (Thermoanaerobacter tengcongensis).